We begin with the raw amino-acid sequence, 270 residues long: Small ribosomal subunit protein bS1m (270 aa).

The tract at residues 218–250 (TKQGFKHLGPKPLAYTEKKRETTKQSTKNNVFQ) is disordered.

The protein belongs to the bacterial ribosomal protein bS1 family.

Its subcellular location is the mitochondrion. In Marchantia polymorpha (Common liverwort), this protein is Small ribosomal subunit protein bS1m (RPS1).